A 622-amino-acid polypeptide reads, in one-letter code: Dynein axonemal assembly factor 1 (622 aa).

The span at 1–11 shows a compositional bias: polar residues; that stretch reads MHPEVSEQQAD. The disordered stretch occupies residues 1 to 80; that stretch reads MHPEVSEQQA…ARNDRDDRGP (80 aa). Positions 32 to 42 are enriched in basic and acidic residues; the sequence is VRKEEINETKE. The segment covering 48–59 has biased composition (low complexity); sequence STTSCQSQKQQS. Basic and acidic residues predominate over residues 62 to 80; sequence SRLDCRSGYARNDRDDRGP. LRR repeat units follow at residues 101 to 123, 124 to 145, 146 to 167, 168 to 189, 190 to 211, and 215 to 236; these read ALND…EEYT, GLRC…QAQS, ELRC…EPLQ, KLDA…SCLP, VLNT…QHLR, and RLCV…SVLE. An LRRCT domain is found at 249–288; that stretch reads NPVTKHIPNYRRTVTVRLKQLTYLDDRPVFPKDRACAEAW. Residues 326 to 336 are compositionally biased toward basic and acidic residues; that stretch reads EERKKARDKGE. 2 disordered regions span residues 326–360 and 399–431; these read EERK…PLGE and EEPD…TDGT. Low complexity-rich tracts occupy residues 337-351 and 415-428; these read TPLP…TSPE and VATA…VAAT. Ser349 carries the post-translational modification Phosphoserine. 2 positions are modified to phosphoserine: Ser464 and Ser487. Disordered regions lie at residues 480–503 and 525–622; these read ISSL…EHTP and RVPL…FGLD. Residues 539–550 are compositionally biased toward polar residues; that stretch reads APETQGQVFSTT.

This sequence belongs to the DNAAF1 family.

The protein resides in the cell projection. It is found in the cilium. In terms of biological role, cilium-specific protein required for the stability of the ciliary architecture. Plays a role in cytoplasmic preassembly of dynein arms. Involved in regulation of microtubule-based cilia and actin-based brush border microvilli. In Peromyscus polionotus (Oldfield mouse), this protein is Dynein axonemal assembly factor 1 (Dnaaf1).